Reading from the N-terminus, the 495-residue chain is Calcium-dependent protein kinase 11 (495 aa).

One can recognise a Protein kinase domain in the interval 26–284 (YLLGKKLGQG…AHEALCHPWI (259 aa)). Residues 32–40 (LGQGQFGTT) and Lys55 contribute to the ATP site. Asp150 serves as the catalytic Proton acceptor. Ser190 is subject to Phosphoserine. An autoinhibitory domain region spans residues 290-320 (APDKPLDPAVLSRLKQFSQMNKIKKMALRVI). EF-hand domains lie at 327 to 362 (EEIG…VGSE), 363 to 398 (LMES…MNKM), 399 to 434 (EREE…FGLC), and 438 to 468 (LDDM…GDGV). Ca(2+) contacts are provided by Asp340, Asp342, Ser344, Thr346, Glu351, Asp376, Asp378, Ser380, Thr382, Glu387, Asp412, Asp414, Ser416, Tyr418, Glu423, Asp446, Asp448, Asp450, Lys452, and Glu457.

It belongs to the protein kinase superfamily. Ser/Thr protein kinase family. CDPK subfamily. Interacts with Di19.

Its subcellular location is the cytoplasm. The protein resides in the nucleus. It carries out the reaction L-seryl-[protein] + ATP = O-phospho-L-seryl-[protein] + ADP + H(+). The enzyme catalyses L-threonyl-[protein] + ATP = O-phospho-L-threonyl-[protein] + ADP + H(+). Activated by calcium. Autophosphorylation may play an important role in the regulation of the kinase activity. Functionally, may play a role in signal transduction pathways that involve calcium as a second messenger. Functions as a regulator of the calcium-mediated abscisic acid (ABA) signaling pathway. Phosphorylates ABA-responsive transcription factors ABF1 and ABF4 in vitro. The protein is Calcium-dependent protein kinase 11 (CPK11) of Arabidopsis thaliana (Mouse-ear cress).